The following is a 730-amino-acid chain: Exostosin-1a (730 aa).

Over 1–6 (MQAKKR) the chain is Cytoplasmic. The chain crosses the membrane as a helical; Signal-anchor for type II membrane protein span at residues 7–27 (YLILFSAGVCLILLFYLQGPA). The Lumenal segment spans residues 28–730 (SRRTPKRGDD…RKKYRDIERL (703 aa)). Asn-314 is a glycosylation site (N-linked (GlcNAc...) asparagine). UDP-N-acetyl-alpha-D-glucosamine is bound by residues Arg-533, Asp-549, Glu-550, Asp-551, Glu-637, Asp-638, and Arg-685. Residue Asp-551 coordinates Mn(2+). Cys-636 and Cys-688 are joined by a disulfide. Residue Asp-638 is part of the active site.

This sequence belongs to the glycosyltransferase 47 family. Mn(2+) serves as cofactor.

The protein resides in the endoplasmic reticulum membrane. The enzyme catalyses 3-O-{[(1-&gt;4)-beta-D-GlcA-(1-&gt;4)-alpha-D-GlcNAc](n)-(1-&gt;4)-beta-D-GlcA-(1-&gt;3)-beta-D-Gal-(1-&gt;3)-beta-D-Gal-(1-&gt;4)-beta-D-Xyl}-L-seryl-[protein] + UDP-N-acetyl-alpha-D-glucosamine = 3-O-{alpha-D-GlcNAc-[(1-&gt;4)-beta-D-GlcA-(1-&gt;4)-alpha-D-GlcNAc](n)-(1-&gt;4)-beta-D-GlcA-(1-&gt;3)-beta-D-Gal-(1-&gt;3)-beta-D-Gal-(1-&gt;4)-beta-D-Xyl}-L-seryl-[protein] + UDP + H(+). The catalysed reaction is 3-O-{alpha-D-GlcNAc-[(1-&gt;4)-beta-D-GlcA-(1-&gt;4)-alpha-D-GlcNAc](n)-(1-&gt;4)-beta-D-GlcA-(1-&gt;3)-beta-D-Gal-(1-&gt;3)-beta-D-Gal-(1-&gt;4)-beta-D-Xyl}-L-seryl-[protein] + UDP-alpha-D-glucuronate = 3-O-{[(1-&gt;4)-beta-D-GlcA-(1-&gt;4)-alpha-D-GlcNAc](n+1)-(1-&gt;4)-beta-D-GlcA-(1-&gt;3)-beta-D-Gal-(1-&gt;3)-beta-D-Gal-(1-&gt;4)-beta-D-Xyl}-L-seryl-[protein] + UDP + H(+). It participates in protein modification; protein glycosylation. Glycosyltransferase required for the biosynthesis of heparan-sulfate. The polypeptide is Exostosin-1a (ext1a) (Danio rerio (Zebrafish)).